Reading from the N-terminus, the 158-residue chain is 3-dehydroquinate dehydratase (158 aa).

Catalysis depends on Tyr-24, which acts as the Proton acceptor. The substrate site is built by Asn-75, His-81, and Asp-88. His-101 serves as the catalytic Proton donor. Residues 102–103 (LS) and Arg-112 each bind substrate.

This sequence belongs to the type-II 3-dehydroquinase family. As to quaternary structure, homododecamer.

It carries out the reaction 3-dehydroquinate = 3-dehydroshikimate + H2O. It functions in the pathway metabolic intermediate biosynthesis; chorismate biosynthesis; chorismate from D-erythrose 4-phosphate and phosphoenolpyruvate: step 3/7. In terms of biological role, catalyzes a trans-dehydration via an enolate intermediate. The protein is 3-dehydroquinate dehydratase of Bartonella bacilliformis (strain ATCC 35685 / KC583 / Herrer 020/F12,63).